The primary structure comprises 182 residues: Peptidyl-tRNA hydrolase (182 aa).

Tyrosine 14 lines the tRNA pocket. Histidine 19 (proton acceptor) is an active-site residue. Positions 64, 66, and 112 each coordinate tRNA.

The protein belongs to the PTH family. As to quaternary structure, monomer.

Its subcellular location is the cytoplasm. It catalyses the reaction an N-acyl-L-alpha-aminoacyl-tRNA + H2O = an N-acyl-L-amino acid + a tRNA + H(+). Hydrolyzes ribosome-free peptidyl-tRNAs (with 1 or more amino acids incorporated), which drop off the ribosome during protein synthesis, or as a result of ribosome stalling. Its function is as follows. Catalyzes the release of premature peptidyl moieties from peptidyl-tRNA molecules trapped in stalled 50S ribosomal subunits, and thus maintains levels of free tRNAs and 50S ribosomes. This chain is Peptidyl-tRNA hydrolase, found in Wolbachia sp. subsp. Brugia malayi (strain TRS).